Here is a 628-residue protein sequence, read N- to C-terminus: Putative ankyrin repeat protein L769 (628 aa).

ANK repeat units lie at residues 217-246 (NYMD…EYDF), 333-362 (DLDE…DINR), 421-451 (TAEN…NHDL), and 512-542 (NNLK…DQDY).

This Acanthamoeba polyphaga mimivirus (APMV) protein is Putative ankyrin repeat protein L769.